Here is a 153-residue protein sequence, read N- to C-terminus: Ubiquitin-conjugating enzyme E2 ubc-18 (153 aa).

The region spanning 2-149 (SATRRLQKEL…AEEHTRKHAE (148 aa)) is the UBC core domain. The active-site Glycyl thioester intermediate is Cys86.

This sequence belongs to the ubiquitin-conjugating enzyme family. In terms of assembly, interacts with E3 ubiquitin-protein ligase wwp-1. Interacts with RBR-type E3 ubiquitin transferase ari-1.1. As to expression, expressed in neurons localized in the head and tail of adults.

The enzyme catalyses S-ubiquitinyl-[E1 ubiquitin-activating enzyme]-L-cysteine + [E2 ubiquitin-conjugating enzyme]-L-cysteine = [E1 ubiquitin-activating enzyme]-L-cysteine + S-ubiquitinyl-[E2 ubiquitin-conjugating enzyme]-L-cysteine.. Its function is as follows. Ubiquitin-conjugating enzyme E2. Accepts ubiquitin from the E1 complex and catalyzes its covalent attachment to other proteins. Required for diet restriction-mediated lifespan extension, probably acting as part of a complex with ubiquitin-protein ligase wwp-1. Acts redundantly with lin-35/Rb in the regulation of pharyngeal morphogenesis during embryonic development by negatively regulating the expression of proteins such as sup-35. The protein is Ubiquitin-conjugating enzyme E2 ubc-18 of Caenorhabditis elegans.